Consider the following 365-residue polypeptide: Dual-specificity RNA methyltransferase RlmN (365 aa).

The active-site Proton acceptor is the glutamate 91. The 241-residue stretch at glutamate 97–aspartate 337 folds into the Radical SAM core domain. Cysteine 104 and cysteine 342 form a disulfide bridge. [4Fe-4S] cluster contacts are provided by cysteine 111, cysteine 115, and cysteine 118. Residues glycine 168 to glutamate 169, serine 200, serine 222 to histidine 224, and asparagine 299 each bind S-adenosyl-L-methionine. Cysteine 342 (S-methylcysteine intermediate) is an active-site residue.

This sequence belongs to the radical SAM superfamily. RlmN family. Requires [4Fe-4S] cluster as cofactor.

Its subcellular location is the cytoplasm. The catalysed reaction is adenosine(2503) in 23S rRNA + 2 reduced [2Fe-2S]-[ferredoxin] + 2 S-adenosyl-L-methionine = 2-methyladenosine(2503) in 23S rRNA + 5'-deoxyadenosine + L-methionine + 2 oxidized [2Fe-2S]-[ferredoxin] + S-adenosyl-L-homocysteine. It catalyses the reaction adenosine(37) in tRNA + 2 reduced [2Fe-2S]-[ferredoxin] + 2 S-adenosyl-L-methionine = 2-methyladenosine(37) in tRNA + 5'-deoxyadenosine + L-methionine + 2 oxidized [2Fe-2S]-[ferredoxin] + S-adenosyl-L-homocysteine. Specifically methylates position 2 of adenine 2503 in 23S rRNA and position 2 of adenine 37 in tRNAs. m2A2503 modification seems to play a crucial role in the proofreading step occurring at the peptidyl transferase center and thus would serve to optimize ribosomal fidelity. This Nitrosospira multiformis (strain ATCC 25196 / NCIMB 11849 / C 71) protein is Dual-specificity RNA methyltransferase RlmN.